A 365-amino-acid polypeptide reads, in one-letter code: Peptidyl-prolyl cis-trans isomerase FKBP42 (365 aa).

The segment covering methionine 1–glutamate 15 has biased composition (basic and acidic residues). The interval methionine 1–alanine 44 is disordered. The segment at methionine 1–glutamate 163 is interaction with MDR1/PGP1. The 93-residue stretch at tyrosine 67–aspartate 159 folds into the PPIase FKBP-type domain. The interval glutamate 163 to lysine 337 is interaction with MRP1. TPR repeat units lie at residues alanine 179–aspartate 212, asparagine 230–asparagine 263, and proline 264–aspartate 297. The segment at glutamine 310–phenylalanine 326 is calmodulin-binding. The helical; Anchor for type IV membrane protein transmembrane segment at serine 338 to phenylalanine 357 threads the bilayer.

It belongs to the FKBP-type PPIase family. As to quaternary structure, interacts with calmodulin (CaM), MRP1, MRP2, MDR1/PGP1, MDR11/PGP19 and SHD/HSP90. Interacts with 1-naphthylphthalamic acid (NPA).

The protein resides in the cell membrane. The protein localises to the vacuole membrane. It is found in the endoplasmic reticulum. The enzyme catalyses [protein]-peptidylproline (omega=180) = [protein]-peptidylproline (omega=0). Functionally, PPIases accelerate the folding of proteins. It catalyzes the cis-trans isomerization of proline imidic peptide bonds in oligopeptides. Modulates the uptake of MRP substrates into the vacuole; reduces metolachlor-GS (MOC-GS) and enhances 17-beta-estradiol 17-(beta-D-glucuronide) (E(2)17betaG) uptake. Regulates cell elongation and orientation. Functions as a positive regulator of PGP1-mediated auxin transport. Confers drug modulation of PGP1 efflux activity as interaction with NPA or flavonol quercetin prevents its physical and functional interaction with PGP1. Required for the proper localization of auxin-related ABCB transporters. Plays a role in brassinosteroid (BR) signaling pathway. Required for seed development by promoting stamen elongation and, to a lesser extent, anther dehiscence and pollen maturation, probably as a chaperone helping ABCB1 and ABCB19 auxin transporters localization and activation. Involved in auxin signaling in nectaries to promote starch accumulation to attract visiting pollinators. This is Peptidyl-prolyl cis-trans isomerase FKBP42 from Arabidopsis thaliana (Mouse-ear cress).